Consider the following 457-residue polypeptide: Siroheme synthase (457 aa).

Positions 1–204 are precorrin-2 dehydrogenase /sirohydrochlorin ferrochelatase; sequence MDHLPIFCQL…NDQKAITETT (204 aa). Residues 22–23 and 43–44 each bind NAD(+); these read DV and LA. At S128 the chain carries Phosphoserine. The interval 216–457 is uroporphyrinogen-III C-methyltransferase; the sequence is GEVVLVGAGP…RDKLNWFSNH (242 aa). Position 225 (P225) interacts with S-adenosyl-L-methionine. D248 (proton acceptor) is an active-site residue. The active-site Proton donor is K270. Residues 301–303, I306, 331–332, M382, and G411 contribute to the S-adenosyl-L-methionine site; these read GGD and TA.

It in the N-terminal section; belongs to the precorrin-2 dehydrogenase / sirohydrochlorin ferrochelatase family. This sequence in the C-terminal section; belongs to the precorrin methyltransferase family.

It catalyses the reaction uroporphyrinogen III + 2 S-adenosyl-L-methionine = precorrin-2 + 2 S-adenosyl-L-homocysteine + H(+). The enzyme catalyses precorrin-2 + NAD(+) = sirohydrochlorin + NADH + 2 H(+). It carries out the reaction siroheme + 2 H(+) = sirohydrochlorin + Fe(2+). The protein operates within cofactor biosynthesis; adenosylcobalamin biosynthesis; precorrin-2 from uroporphyrinogen III: step 1/1. Its pathway is cofactor biosynthesis; adenosylcobalamin biosynthesis; sirohydrochlorin from precorrin-2: step 1/1. It functions in the pathway porphyrin-containing compound metabolism; siroheme biosynthesis; precorrin-2 from uroporphyrinogen III: step 1/1. It participates in porphyrin-containing compound metabolism; siroheme biosynthesis; siroheme from sirohydrochlorin: step 1/1. The protein operates within porphyrin-containing compound metabolism; siroheme biosynthesis; sirohydrochlorin from precorrin-2: step 1/1. Its function is as follows. Multifunctional enzyme that catalyzes the SAM-dependent methylations of uroporphyrinogen III at position C-2 and C-7 to form precorrin-2 via precorrin-1. Then it catalyzes the NAD-dependent ring dehydrogenation of precorrin-2 to yield sirohydrochlorin. Finally, it catalyzes the ferrochelation of sirohydrochlorin to yield siroheme. The protein is Siroheme synthase of Escherichia coli O6:K15:H31 (strain 536 / UPEC).